The primary structure comprises 380 residues: Cytochrome b (380 aa).

Transmembrane regions (helical) follow at residues 34–54 (FGSL…LLAM), 78–99 (WLIR…FLHI), 114–134 (WNTG…GYVL), and 179–199 (FFAL…IHLT). 2 residues coordinate heme b: histidine 84 and histidine 98. Heme b contacts are provided by histidine 183 and histidine 197. Histidine 202 is a binding site for a ubiquinone. 4 consecutive transmembrane segments (helical) span residues 227 to 247 (IKDI…ALFS), 289 to 309 (LGGV…PFLH), 321 to 341 (LSQT…WIGS), and 348 to 368 (FIII…ILFP).

This sequence belongs to the cytochrome b family. The cytochrome bc1 complex contains 11 subunits: 3 respiratory subunits (MT-CYB, CYC1 and UQCRFS1), 2 core proteins (UQCRC1 and UQCRC2) and 6 low-molecular weight proteins (UQCRH/QCR6, UQCRB/QCR7, UQCRQ/QCR8, UQCR10/QCR9, UQCR11/QCR10 and a cleavage product of UQCRFS1). This cytochrome bc1 complex then forms a dimer. It depends on heme b as a cofactor.

It localises to the mitochondrion inner membrane. In terms of biological role, component of the ubiquinol-cytochrome c reductase complex (complex III or cytochrome b-c1 complex) that is part of the mitochondrial respiratory chain. The b-c1 complex mediates electron transfer from ubiquinol to cytochrome c. Contributes to the generation of a proton gradient across the mitochondrial membrane that is then used for ATP synthesis. This Alectoris rufa (Red-legged partridge) protein is Cytochrome b (MT-CYB).